Consider the following 67-residue polypeptide: Large ribosomal subunit protein bL35 (67 aa).

Belongs to the bacterial ribosomal protein bL35 family.

This chain is Large ribosomal subunit protein bL35, found in Caldanaerobacter subterraneus subsp. tengcongensis (strain DSM 15242 / JCM 11007 / NBRC 100824 / MB4) (Thermoanaerobacter tengcongensis).